The primary structure comprises 172 residues: C-phycocyanin beta chain (172 aa).

Position 72 is an N4-methylasparagine (Asn72). (2R,3E)-phycocyanobilin-binding residues include Cys82 and Cys153.

This sequence belongs to the phycobiliprotein family. Heterodimer of an alpha and a beta subunit, which further assembles into trimers and the trimers into hexamers. The basic functional unit of phycobiliproteins is a ring-shaped hexamer formed from two back-to-back trimers contacting via the alpha chain subunits. The trimers are composed of alpha/beta subunit heterodimers arranged around a three-fold axis of symmetry. The phycoerythrins also contain a gamma subunit which is located in the center of the hexamer. Contains two covalently linked bilin chromophores.

The protein resides in the plastid. It is found in the chloroplast thylakoid membrane. In terms of biological role, light-harvesting photosynthetic bile pigment-protein from the phycobiliprotein complex (phycobilisome, PBS). Phycocyanin is the major phycobiliprotein in the PBS rod. The chain is C-phycocyanin beta chain (cpcB) from Rhodella violacea (Red alga).